Consider the following 302-residue polypeptide: MNSHLEDLTTEKVNDDTVNIDVMNTEDMLKAINNEDIKVAYAVQKEIHNIVKAVDIVSEKLKNNGRLFYIGAGTSGRLGVLDASECPPTYGTNPELVQGIIAGGNEAILKAVEGAEDDEDMGRSIIKERNMTSKDVVIGITASGRTPFVIGAMKEARKNEIIAIGISNNKNSLINKNVDIKITPIVGPEVIMGSTRMKAGTAQKLVLNMITTAVMIKLGKVYGNLMIDLSLSNKKLIDRAVRIIEHATKVEKEKAMEYLKRANLKPKVAIVMIKTNTKSYEAERLLNMADGFVTKAIKLGSK.

The region spanning 57–220 (VSEKLKNNGR…TTAVMIKLGK (164 aa)) is the SIS domain. Glu-85 acts as the Proton donor in catalysis. Residue Glu-116 is part of the active site.

The protein belongs to the GCKR-like family. MurNAc-6-P etherase subfamily. Homodimer.

The enzyme catalyses N-acetyl-D-muramate 6-phosphate + H2O = N-acetyl-D-glucosamine 6-phosphate + (R)-lactate. The protein operates within amino-sugar metabolism; N-acetylmuramate degradation. Functionally, specifically catalyzes the cleavage of the D-lactyl ether substituent of MurNAc 6-phosphate, producing GlcNAc 6-phosphate and D-lactate. In Clostridium acetobutylicum (strain ATCC 824 / DSM 792 / JCM 1419 / IAM 19013 / LMG 5710 / NBRC 13948 / NRRL B-527 / VKM B-1787 / 2291 / W), this protein is N-acetylmuramic acid 6-phosphate etherase.